Here is a 394-residue protein sequence, read N- to C-terminus: S-adenosylmethionine synthase 2 (394 aa).

A Mg(2+)-binding site is contributed by Glu11. His17 contacts ATP. Residue Glu45 coordinates K(+). 2 residues coordinate L-methionine: Glu58 and Gln101. ATP-binding positions include 169–171 (DGK), 237–240 (SGRF), Asp248, 254–255 (RK), Ala271, Lys275, and Lys279. Asp248 is an L-methionine binding site. Lys279 is an L-methionine binding site.

It belongs to the AdoMet synthase family. Homotetramer. The cofactor is Mn(2+). Requires Mg(2+) as cofactor. It depends on Co(2+) as a cofactor. K(+) serves as cofactor.

The protein resides in the cytoplasm. It carries out the reaction L-methionine + ATP + H2O = S-adenosyl-L-methionine + phosphate + diphosphate. The protein operates within amino-acid biosynthesis; S-adenosyl-L-methionine biosynthesis; S-adenosyl-L-methionine from L-methionine: step 1/1. Functionally, catalyzes the formation of S-adenosylmethionine from methionine and ATP. The reaction comprises two steps that are both catalyzed by the same enzyme: formation of S-adenosylmethionine (AdoMet) and triphosphate, and subsequent hydrolysis of the triphosphate. This Oryza sativa subsp. japonica (Rice) protein is S-adenosylmethionine synthase 2 (SAM2).